The sequence spans 136 residues: Large ribosomal subunit protein bL19 (136 aa).

The protein belongs to the bacterial ribosomal protein bL19 family.

Its function is as follows. This protein is located at the 30S-50S ribosomal subunit interface and may play a role in the structure and function of the aminoacyl-tRNA binding site. The chain is Large ribosomal subunit protein bL19 from Xylella fastidiosa (strain 9a5c).